We begin with the raw amino-acid sequence, 468 residues long: ATP synthase subunit beta (468 aa).

155–162 (GGAGVGKT) is an ATP binding site.

It belongs to the ATPase alpha/beta chains family. In terms of assembly, F-type ATPases have 2 components, CF(1) - the catalytic core - and CF(0) - the membrane proton channel. CF(1) has five subunits: alpha(3), beta(3), gamma(1), delta(1), epsilon(1). CF(0) has three main subunits: a(1), b(2) and c(9-12). The alpha and beta chains form an alternating ring which encloses part of the gamma chain. CF(1) is attached to CF(0) by a central stalk formed by the gamma and epsilon chains, while a peripheral stalk is formed by the delta and b chains.

Its subcellular location is the cell membrane. The catalysed reaction is ATP + H2O + 4 H(+)(in) = ADP + phosphate + 5 H(+)(out). In terms of biological role, produces ATP from ADP in the presence of a proton gradient across the membrane. The catalytic sites are hosted primarily by the beta subunits. The polypeptide is ATP synthase subunit beta (Bacillus cereus (strain G9842)).